A 321-amino-acid polypeptide reads, in one-letter code: Taste receptor type 2 member 135 (321 aa).

Topologically, residues 1–28 (MGPIMSTGETSTAHTVLGCQITDKTVIT) are extracellular. Residues 29–49 (LFVILVFSCLVAVVGNGFIII) traverse the membrane as a helical segment. The Cytoplasmic portion of the chain corresponds to 50–75 (ALGMKWLLRRTLSAHNKLLISLAASR). A helical membrane pass occupies residues 76 to 96 (FCLQCVVIGKNIYVFLNPSSF). Topologically, residues 97–106 (PYNPVIQLLN) are extracellular. Residues 107–127 (LMWDFLTAATIWFCSLLGFFY) form a helical membrane-spanning segment. Over 128-149 (CVKIATLTHPVFVWLKYRLPGW) the chain is Cytoplasmic. A helical membrane pass occupies residues 150-170 (VPWMLLSAVGMSSLTSILCFI). The Extracellular segment spans residues 171–207 (GNHMIYQNYARRGHQPWNATGNSLRHSLEKFYFISIK). Asparagine 188 carries N-linked (GlcNAc...) asparagine glycosylation. The helical transmembrane segment at 208-228 (IIMWTVPTVIFSIFMSLLLVS) threads the bilayer. Topologically, residues 229–253 (LVRHMKKTLLALSELRDVWAQAHFK) are cytoplasmic. A helical membrane pass occupies residues 254–274 (ALLPLLSFIILFISCFLTLVL). Over 275–286 (SSASSTPYQEFR) the chain is Extracellular. Residues 287-307 (YWMWQVVIHLCTVIHPIVILL) traverse the membrane as a helical segment. At 308 to 321 (SNPVLRVVMKRGCC) the chain is on the cytoplasmic side.

This sequence belongs to the G-protein coupled receptor T2R family.

It localises to the membrane. Putative taste receptor which may play a role in the perception of bitterness. This Rattus norvegicus (Rat) protein is Taste receptor type 2 member 135.